The chain runs to 916 residues: DNA gyrase subunit A (916 aa).

Positions 42–544 (LPDVRDGLKP…FGGDIADEDL (503 aa)) constitute a Topo IIA-type catalytic domain. Tyrosine 130 acts as the O-(5'-phospho-DNA)-tyrosine intermediate in catalysis. The GyrA-box signature appears at 571–577 (QRRGGRG). Over residues 739–748 (SDDLEDETAD) the composition is skewed to acidic residues. Disordered stretches follow at residues 739–774 (SDDLEDETADNENTLPSGKNGVRPSGRGSGGLRGMR) and 897–916 (ESELSGASVISNVTEPEAEN).

The protein belongs to the type II topoisomerase GyrA/ParC subunit family. As to quaternary structure, heterotetramer, composed of two GyrA and two GyrB chains. In the heterotetramer, GyrA contains the active site tyrosine that forms a transient covalent intermediate with DNA, while GyrB binds cofactors and catalyzes ATP hydrolysis.

The protein localises to the cytoplasm. The catalysed reaction is ATP-dependent breakage, passage and rejoining of double-stranded DNA.. In terms of biological role, a type II topoisomerase that negatively supercoils closed circular double-stranded (ds) DNA in an ATP-dependent manner to modulate DNA topology and maintain chromosomes in an underwound state. Negative supercoiling favors strand separation, and DNA replication, transcription, recombination and repair, all of which involve strand separation. Also able to catalyze the interconversion of other topological isomers of dsDNA rings, including catenanes and knotted rings. Type II topoisomerases break and join 2 DNA strands simultaneously in an ATP-dependent manner. This chain is DNA gyrase subunit A, found in Neisseria gonorrhoeae.